A 611-amino-acid polypeptide reads, in one-letter code: Glutamine--fructose-6-phosphate aminotransferase [isomerizing] (611 aa).

Residue Cys2 is the Nucleophile; for GATase activity of the active site. Positions 2-219 (CGIVGAVAER…EGDIAEIRRD (218 aa)) constitute a Glutamine amidotransferase type-2 domain. SIS domains lie at 287–427 (AAEL…VKGS) and 460–601 (VAEL…VDQP). Lys606 acts as the For Fru-6P isomerization activity in catalysis.

As to quaternary structure, homodimer.

It is found in the cytoplasm. It carries out the reaction D-fructose 6-phosphate + L-glutamine = D-glucosamine 6-phosphate + L-glutamate. Its function is as follows. Catalyzes the first step in hexosamine metabolism, converting fructose-6P into glucosamine-6P using glutamine as a nitrogen source. The chain is Glutamine--fructose-6-phosphate aminotransferase [isomerizing] from Pseudomonas syringae pv. tomato (strain ATCC BAA-871 / DC3000).